Consider the following 156-residue polypeptide: Small ribosomal subunit protein uS7 (156 aa).

Belongs to the universal ribosomal protein uS7 family. In terms of assembly, part of the 30S ribosomal subunit. Contacts proteins S9 and S11.

Its function is as follows. One of the primary rRNA binding proteins, it binds directly to 16S rRNA where it nucleates assembly of the head domain of the 30S subunit. Is located at the subunit interface close to the decoding center, probably blocks exit of the E-site tRNA. In Oceanobacillus iheyensis (strain DSM 14371 / CIP 107618 / JCM 11309 / KCTC 3954 / HTE831), this protein is Small ribosomal subunit protein uS7.